The sequence spans 275 residues: Ribosomal RNA small subunit methyltransferase A (275 aa).

Residues Asn-19, Leu-21, Gly-46, Glu-71, Asp-94, and Asn-117 each coordinate S-adenosyl-L-methionine.

This sequence belongs to the class I-like SAM-binding methyltransferase superfamily. rRNA adenine N(6)-methyltransferase family. RsmA subfamily.

The protein localises to the cytoplasm. It carries out the reaction adenosine(1518)/adenosine(1519) in 16S rRNA + 4 S-adenosyl-L-methionine = N(6)-dimethyladenosine(1518)/N(6)-dimethyladenosine(1519) in 16S rRNA + 4 S-adenosyl-L-homocysteine + 4 H(+). Specifically dimethylates two adjacent adenosines (A1518 and A1519) in the loop of a conserved hairpin near the 3'-end of 16S rRNA in the 30S particle. May play a critical role in biogenesis of 30S subunits. This is Ribosomal RNA small subunit methyltransferase A from Burkholderia multivorans (strain ATCC 17616 / 249).